Consider the following 945-residue polypeptide: MSTPSIPQFTSPFSPFSSGSHSTGMAPSQTVGLDTLAEGSQYVLEQLQLSRDAAGSGAGDGAPSTSLRNSMSHTKDQPPFDNEKNQSTGSGFRDALQRDPLVEARSAIRKTSSSAPVRRRISRACDQCNQLRTKCDGQHPCAHCIEFGLTCEYARERKKRGKASKKDLAAAAAAATQGSNGHSGQANASLMGERTSEDSRPGQDVNGTYDSAFESHHLSSQPSHMQHASTAGISGLHESQTAPSHSQPSLGTTIDAMHLNHFNTMNDSGRPAMSISDLRSLPPSVLPPQGLSSGYNASAFALVNPQEPGSPANQFRLGSSAENPTAPFLGLSPPGQSPGWLPLPSPSPANFPSFSLHPFSSTLRYPVLQPVLPHIASIIPQSLACDLLDVYFTSSSSSHLSPLSPYVVGYIFRKQSFLHPTKPRICSPGLLASMLWVAAQTSEAAFLTSPPSARGRVCQKLLELTIGLLRPLVHGPATGEASPNYAANMVINGVALGGFGVSMDQLGAQSSATGAVDDVATYVHLATVVSASEYKAASMRWWTAAWSLARELKLGRELPPNVSHARQDGERDGDGEADKRHPPTLITSLGHGSGSSGINVTEEEREERRRLWWLLYATDRHLALCYNRPLTLLDKECGGLLQPMNDDLWQVGDFAAAAYRQVGPPVECTGHSMYGYFLPLMTILGGIVDLHHAENHPRFGLAFRNSPEWERQVLDVTRQLDTYGRSLKEFEARYTSNLTLGATDNEPVVEGAHLDHTSPSGRSSSTVGSRVSESIVHTRMVVAYGTHIMHVLHILLAGKWDPVNLLEDHDLWISSESFVSAMSHAVGAAEAAAEILEYDPDLSFMPFFFGIYLLQGSFLLLLAADKLQGDASPSVVRACETIVRAHEACVVTLNTEYQRTFRKVMRSALAQVRGRIPEDFGEQQQRRREVLALYRWSGDGSGLAL.

Residues 1 to 23 (MSTPSIPQFTSPFSPFSSGSHST) are compositionally biased toward low complexity. 2 disordered regions span residues 1–33 (MSTP…TVGL) and 52–93 (DAAG…SGFR). The segment covering 63-72 (PSTSLRNSMS) has biased composition (polar residues). Residues 73–84 (HTKDQPPFDNEK) are compositionally biased toward basic and acidic residues. Residues 125 to 151 (CDQCNQLRTKCDGQHPCAHCIEFGLTC) constitute a DNA-binding region (zn(2)-C6 fungal-type). 2 disordered regions span residues 172–210 (AAAA…GTYD) and 559–601 (PPNV…INVT). The segment covering 176 to 188 (TQGSNGHSGQANA) has biased composition (polar residues). Basic and acidic residues predominate over residues 565–581 (ARQDGERDGDGEADKRH).

It belongs to the xlnR/xlr1 family.

It is found in the nucleus. In terms of biological role, transcriptional activator of the xylanolytic system. Involved in the regulation of extracellular cellulolytic and xylanolytic genes and in the regulation of the intracellular activities of D-xylose catabolic genes in the pentose catabolic pathway (PCP) in response to the presence of D-xylose. Binds to the DNA sequence 5'-GGCTAAA-3'. This chain is Xylanolytic transcriptional activator xlnR (xlnR), found in Aspergillus niger (strain ATCC MYA-4892 / CBS 513.88 / FGSC A1513).